We begin with the raw amino-acid sequence, 356 residues long: D-alanine--D-alanine ligase (356 aa).

An ATP-grasp domain is found at 146–350 (KKLLVAEGLP…YAELLDTLIQ (205 aa)). 173–228 (KERLGLPVFVKPARGGSSIGVSKVSAWEDLEAALTLAYESDDKVLIEPEISGAEVE) lines the ATP pocket. Mg(2+) is bound by residues aspartate 305, glutamate 317, and asparagine 319.

Belongs to the D-alanine--D-alanine ligase family. Mg(2+) serves as cofactor. It depends on Mn(2+) as a cofactor.

It is found in the cytoplasm. The catalysed reaction is 2 D-alanine + ATP = D-alanyl-D-alanine + ADP + phosphate + H(+). It participates in cell wall biogenesis; peptidoglycan biosynthesis. Cell wall formation. This chain is D-alanine--D-alanine ligase, found in Corynebacterium aurimucosum (strain ATCC 700975 / DSM 44827 / CIP 107346 / CN-1) (Corynebacterium nigricans).